Reading from the N-terminus, the 375-residue chain is MKAVGLVVEYNPFHNGHRYHLAQAKRLTGADVVVAVMSGDFTQRGEPTILDKWSRTLAALQNGVDLVVELPVADAVQPAHRFAMGALSLLNDLQVADVVFGAEHPDWDFAAMVKAEQDFNQAAFHQFNNTYATQFNQQLEAVTGHALTDPNDILAFAYHRAKAAGDFGFHLQPIQRVDNHYADQQLTGAISSAGAIRQAVKGHQDVTETVPVQTASALAKLTTIPNWEQLYPLLANHLIQTPAPLLEQTYQVKEGLENRLKEAAERHRDFTSFLKAVKTKRYTYGRLMRVAFYLTLNLSDQDMANYHPYHRVLGFTAAGQAYLHQVKKELSYPLITKVNQRMKNAELALDYRAGKLYQFFGTPEQDLTRGPIRLV.

ATP-binding positions include 7-20 (VVEYNPFHNGHRYH), G101, N151, and R176.

It belongs to the TmcAL family.

The protein localises to the cytoplasm. The enzyme catalyses cytidine(34) in elongator tRNA(Met) + acetate + ATP = N(4)-acetylcytidine(34) in elongator tRNA(Met) + AMP + diphosphate. Catalyzes the formation of N(4)-acetylcytidine (ac(4)C) at the wobble position of elongator tRNA(Met), using acetate and ATP as substrates. First activates an acetate ion to form acetyladenylate (Ac-AMP) and then transfers the acetyl group to tRNA to form ac(4)C34. This is tRNA(Met) cytidine acetate ligase from Limosilactobacillus fermentum (strain NBRC 3956 / LMG 18251) (Lactobacillus fermentum).